Consider the following 100-residue polypeptide: Small ubiquitin-related modifier 1 (100 aa).

Positions 1 to 12 are enriched in basic and acidic residues; the sequence is MSAAGEEDKKPA. The segment at 1 to 23 is disordered; the sequence is MSAAGEEDKKPAGGEGGGAHINL. One can recognise a Ubiquitin-like domain in the interval 19–96; sequence AHINLKVKGQ…IDAMLHQTGG (78 aa). Residue glycine 96 forms a Glycyl lysine isopeptide (Gly-Lys) (interchain with K-? in acceptor proteins) linkage.

This sequence belongs to the ubiquitin family. SUMO subfamily. In terms of assembly, interacts with SAE2, SCE1 and SIZ1. Covalently attached to a number of proteins.

It is found in the nucleus. Its subcellular location is the cytoplasm. Functionally, ubiquitin-like protein which can be covalently attached to target lysines as a monomer. Does not seem to be involved in protein degradation and may function as an antagonist of ubiquitin in the degradation process. In Oryza sativa subsp. japonica (Rice), this protein is Small ubiquitin-related modifier 1 (SUMO1).